Here is a 406-residue protein sequence, read N- to C-terminus: Acetylornithine/succinyldiaminopimelate aminotransferase (406 aa).

Pyridoxal 5'-phosphate is bound by residues 108–109 (GT) and Phe-141. Arg-144 lines the N(2)-acetyl-L-ornithine pocket. Pyridoxal 5'-phosphate is bound at residue 226 to 229 (DEVQ). Lys-255 bears the N6-(pyridoxal phosphate)lysine mark. N(2)-acetyl-L-ornithine is bound at residue Ser-283. Position 284 (Thr-284) interacts with pyridoxal 5'-phosphate.

It belongs to the class-III pyridoxal-phosphate-dependent aminotransferase family. ArgD subfamily. Homodimer. The cofactor is pyridoxal 5'-phosphate.

The protein resides in the cytoplasm. It catalyses the reaction N(2)-acetyl-L-ornithine + 2-oxoglutarate = N-acetyl-L-glutamate 5-semialdehyde + L-glutamate. The enzyme catalyses N-succinyl-(2S,6S)-2,6-diaminopimelate + 2-oxoglutarate = (S)-2-succinylamino-6-oxoheptanedioate + L-glutamate. It participates in amino-acid biosynthesis; L-arginine biosynthesis; N(2)-acetyl-L-ornithine from L-glutamate: step 4/4. Its pathway is amino-acid biosynthesis; L-lysine biosynthesis via DAP pathway; LL-2,6-diaminopimelate from (S)-tetrahydrodipicolinate (succinylase route): step 2/3. Functionally, involved in both the arginine and lysine biosynthetic pathways. The sequence is that of Acetylornithine/succinyldiaminopimelate aminotransferase from Escherichia coli O157:H7.